We begin with the raw amino-acid sequence, 72 residues long: Large ribosomal subunit protein bL31 (72 aa).

Residues cysteine 16, cysteine 18, cysteine 38, and cysteine 41 each coordinate Zn(2+).

The protein belongs to the bacterial ribosomal protein bL31 family. Type A subfamily. In terms of assembly, part of the 50S ribosomal subunit. It depends on Zn(2+) as a cofactor.

Its function is as follows. Binds the 23S rRNA. In Vibrio cholerae serotype O1 (strain ATCC 39541 / Classical Ogawa 395 / O395), this protein is Large ribosomal subunit protein bL31.